The following is a 137-amino-acid chain: Lysozyme (137 aa).

Positions 1–20 (MSAVLVLALVLLSLTCVTDA) are cleaved as a signal peptide. Residues 21-134 (ISDACLTCIC…WNAVKNQGCS (114 aa)) enclose the I-type lysozyme domain. 6 cysteine pairs are disulfide-bonded: Cys25-Cys102, Cys30-Cys37, Cys42-Cys51, Cys64-Cys84, Cys74-Cys80, and Cys98-Cys116. The active-site Proton donor is Glu33. The active-site Nucleophile is the Asp45. 57-63 (KKSYWID) serves as a coordination point for substrate. Substrate is bound by residues Tyr88 and 109–111 (HNG).

It belongs to the glycosyl hydrolase 22 family. Type-I lysozyme subfamily.

Its subcellular location is the secreted. It catalyses the reaction Hydrolysis of (1-&gt;4)-beta-linkages between N-acetylmuramic acid and N-acetyl-D-glucosamine residues in a peptidoglycan and between N-acetyl-D-glucosamine residues in chitodextrins.. In terms of biological role, has bacteriolytic activity. May play a role in digestion and in the host defense mechanisms against invading microbes. The sequence is that of Lysozyme (lysoz) from Ostrea edulis (Native oyster).